The chain runs to 430 residues: Enolase (430 aa).

A (2R)-2-phosphoglycerate-binding site is contributed by Q163. The Proton donor role is filled by E205. Mg(2+)-binding residues include D242, E285, and D312. (2R)-2-phosphoglycerate contacts are provided by K337, R366, S367, and K388. Catalysis depends on K337, which acts as the Proton acceptor.

This sequence belongs to the enolase family. Mg(2+) is required as a cofactor.

It is found in the cytoplasm. Its subcellular location is the secreted. It localises to the cell surface. The catalysed reaction is (2R)-2-phosphoglycerate = phosphoenolpyruvate + H2O. The protein operates within carbohydrate degradation; glycolysis; pyruvate from D-glyceraldehyde 3-phosphate: step 4/5. Its function is as follows. Catalyzes the reversible conversion of 2-phosphoglycerate (2-PG) into phosphoenolpyruvate (PEP). It is essential for the degradation of carbohydrates via glycolysis. The sequence is that of Enolase from Rhodopseudomonas palustris (strain BisB18).